Consider the following 49-residue polypeptide: Large ribosomal subunit protein bL33 (49 aa).

A disordered region spans residues 18–49; the sequence is ITTKNKRNNPERLELKKYSPRLKRTTLHRETK. Residues 25-34 show a composition bias toward basic and acidic residues; that stretch reads NNPERLELKK.

It belongs to the bacterial ribosomal protein bL33 family.

The sequence is that of Large ribosomal subunit protein bL33 from Lysinibacillus sphaericus (strain C3-41).